The chain runs to 190 residues: UPF0301 protein TC_0483 (190 aa).

It belongs to the UPF0301 (AlgH) family.

This is UPF0301 protein TC_0483 from Chlamydia muridarum (strain MoPn / Nigg).